The following is a 293-amino-acid chain: Aspartate carbamoyltransferase catalytic subunit (293 aa).

The carbamoyl phosphate site is built by Arg50 and Thr51. Position 78 (Lys78) interacts with L-aspartate. Carbamoyl phosphate contacts are provided by Arg100, His127, and Gln130. Positions 160 and 210 each coordinate L-aspartate. Carbamoyl phosphate contacts are provided by Ala253 and Pro254.

This sequence belongs to the aspartate/ornithine carbamoyltransferase superfamily. ATCase family. Heterododecamer (2C3:3R2) of six catalytic PyrB chains organized as two trimers (C3), and six regulatory PyrI chains organized as three dimers (R2).

It catalyses the reaction carbamoyl phosphate + L-aspartate = N-carbamoyl-L-aspartate + phosphate + H(+). The protein operates within pyrimidine metabolism; UMP biosynthesis via de novo pathway; (S)-dihydroorotate from bicarbonate: step 2/3. Its function is as follows. Catalyzes the condensation of carbamoyl phosphate and aspartate to form carbamoyl aspartate and inorganic phosphate, the committed step in the de novo pyrimidine nucleotide biosynthesis pathway. This Staphylococcus epidermidis (strain ATCC 12228 / FDA PCI 1200) protein is Aspartate carbamoyltransferase catalytic subunit.